Here is a 171-residue protein sequence, read N- to C-terminus: Ribosome maturation factor RimP (171 aa).

The protein belongs to the RimP family.

The protein resides in the cytoplasm. Its function is as follows. Required for maturation of 30S ribosomal subunits. In Anaeromyxobacter dehalogenans (strain 2CP-C), this protein is Ribosome maturation factor RimP.